We begin with the raw amino-acid sequence, 389 residues long: Tryptophan synthase beta chain (389 aa).

Lysine 84 bears the N6-(pyridoxal phosphate)lysine mark.

This sequence belongs to the TrpB family. In terms of assembly, tetramer of two alpha and two beta chains. Pyridoxal 5'-phosphate serves as cofactor.

It carries out the reaction (1S,2R)-1-C-(indol-3-yl)glycerol 3-phosphate + L-serine = D-glyceraldehyde 3-phosphate + L-tryptophan + H2O. It participates in amino-acid biosynthesis; L-tryptophan biosynthesis; L-tryptophan from chorismate: step 5/5. Its function is as follows. The beta subunit is responsible for the synthesis of L-tryptophan from indole and L-serine. The sequence is that of Tryptophan synthase beta chain from Clostridium novyi (strain NT).